A 559-amino-acid chain; its full sequence is Urocanate hydratase (559 aa).

Residues G53–G54, Q131, G177–G179, E197, R202, N243–A244, Q264–H268, Y274–L275, and Y323 each bind NAD(+). C411 is an active-site residue. An NAD(+)-binding site is contributed by G493.

This sequence belongs to the urocanase family. NAD(+) serves as cofactor.

It localises to the cytoplasm. The catalysed reaction is 4-imidazolone-5-propanoate = trans-urocanate + H2O. It participates in amino-acid degradation; L-histidine degradation into L-glutamate; N-formimidoyl-L-glutamate from L-histidine: step 2/3. Catalyzes the conversion of urocanate to 4-imidazolone-5-propionate. This chain is Urocanate hydratase, found in Pseudomonas aeruginosa (strain ATCC 15692 / DSM 22644 / CIP 104116 / JCM 14847 / LMG 12228 / 1C / PRS 101 / PAO1).